A 702-amino-acid chain; its full sequence is ATP-dependent RNA helicase DDX4 (702 aa).

Residues 22–228 are disordered; sequence FEKDKYSSGA…YIPPPPPEDE (207 aa). Over residues 29–46 the composition is skewed to polar residues; it reads SGANGDTFNRTSASSDIG. Composition is skewed to gly residues over residues 58–68 and 125–137; these read GGFGRGKGFGN and RGSFRGCRGGFGL. Polar residues-rich tracts occupy residues 141–150 and 195–215; these read NSESDQDQGT and SGKNSWKSETEGGESSDSQGP. Ser-195 and Ser-199 each carry phosphoserine. The tract at residues 201-220 is interaction with RANBP9; it reads KSETEGGESSDSQGPKVTYI. A Q motif motif is present at residues 261-289; the sequence is LTFEEANLCQTLNNNIAKAGYTKLTPVQK. A Helicase ATP-binding domain is found at 292 to 475; the sequence is IPIVLAGRDL…GDFLKSSYLF (184 aa). 305–312 serves as a coordination point for ATP; that stretch reads AQTGSGKT. The DEAD box motif lies at 419–422; sequence DEAD. Residues 503–648 enclose the Helicase C-terminal domain; the sequence is KLVEILRNIG…DVPAWLEEIA (146 aa). Residues 681 to 693 show a composition bias toward polar residues; it reads TLNTAGISSSQAP. The segment at 681–702 is disordered; that stretch reads TLNTAGISSSQAPNPVDDESWD. A Phosphoserine modification is found at Ser-700.

This sequence belongs to the DEAD box helicase family. DDX4/VASA subfamily. Found in a mRNP complex, at least composed of TDRD1, TDRD6, TDRD7 and DDX4. Interacts with RANBP9. Interacts with RANBP10. Interacts with PIWIL2 and MAEL. Interacts with BMAL1 and CLOCK. Interacts with Tex19.1 and, probably, Tex19.2. Interacts with RBM46. In terms of tissue distribution, testis-specific.

It is found in the cytoplasm. Its subcellular location is the perinuclear region. The enzyme catalyses ATP + H2O = ADP + phosphate + H(+). Its function is as follows. ATP-dependent RNA helicase required during spermatogenesis to repress transposable elements and preventing their mobilization, which is essential for the germline integrity. Acts via the piRNA metabolic process, which mediates the repression of transposable elements during meiosis by forming complexes composed of piRNAs and Piwi proteins and governs the methylation and subsequent repression of transposons. Involved in the secondary piRNAs metabolic process, the production of piRNAs in fetal male germ cells through a ping-pong amplification cycle. Required for PIWIL2 slicing-triggered piRNA biogenesis: helicase activity enables utilization of one of the slice cleavage fragments generated by PIWIL2 and processing these pre-piRNAs into piRNAs. This Mus musculus (Mouse) protein is ATP-dependent RNA helicase DDX4.